The following is a 283-amino-acid chain: tRNA-cytidine(32) 2-sulfurtransferase (283 aa).

The PP-loop motif motif lies at 37 to 42; it reads SGGKDS. Residues C112, C115, and C203 each coordinate [4Fe-4S] cluster.

The protein belongs to the TtcA family. Homodimer. Mg(2+) is required as a cofactor. Requires [4Fe-4S] cluster as cofactor.

The protein resides in the cytoplasm. It catalyses the reaction cytidine(32) in tRNA + S-sulfanyl-L-cysteinyl-[cysteine desulfurase] + AH2 + ATP = 2-thiocytidine(32) in tRNA + L-cysteinyl-[cysteine desulfurase] + A + AMP + diphosphate + H(+). It functions in the pathway tRNA modification. Catalyzes the ATP-dependent 2-thiolation of cytidine in position 32 of tRNA, to form 2-thiocytidine (s(2)C32). The sulfur atoms are provided by the cysteine/cysteine desulfurase (IscS) system. The chain is tRNA-cytidine(32) 2-sulfurtransferase from Legionella pneumophila (strain Paris).